The primary structure comprises 563 residues: DNA mismatch repair protein MutL (563 aa).

This sequence belongs to the DNA mismatch repair MutL/HexB family.

Its function is as follows. This protein is involved in the repair of mismatches in DNA. It is required for dam-dependent methyl-directed DNA mismatch repair. May act as a 'molecular matchmaker', a protein that promotes the formation of a stable complex between two or more DNA-binding proteins in an ATP-dependent manner without itself being part of a final effector complex. This chain is DNA mismatch repair protein MutL, found in Trichormus variabilis (strain ATCC 29413 / PCC 7937) (Anabaena variabilis).